Here is a 523-residue protein sequence, read N- to C-terminus: GMP synthase [glutamine-hydrolyzing] (523 aa).

Positions 8–205 constitute a Glutamine amidotransferase type-1 domain; it reads KILILDFGSQ…VENICGCARS (198 aa). C85 serves as the catalytic Nucleophile. Catalysis depends on residues H179 and E181. The region spanning 206–398 is the GMPS ATP-PPase domain; sequence WTPENIIEDA…LGLPAEMLNR (193 aa). 233–239 is an ATP binding site; the sequence is SGGVDSS.

Homodimer.

It catalyses the reaction XMP + L-glutamine + ATP + H2O = GMP + L-glutamate + AMP + diphosphate + 2 H(+). It functions in the pathway purine metabolism; GMP biosynthesis; GMP from XMP (L-Gln route): step 1/1. Functionally, catalyzes the synthesis of GMP from XMP. This chain is GMP synthase [glutamine-hydrolyzing], found in Haemophilus ducreyi (strain 35000HP / ATCC 700724).